We begin with the raw amino-acid sequence, 336 residues long: MTLKAGIVGIGMIGSDHLRRLANTVSGVEVVAVCDIVAGRAQAALDKYAIEAKDYNDYHDLINDKDVEVVIITASNEAHADVAVAALNANKYVFCEKPLAVTAADCQRVIEAEQKNGKRMVQIGFMRRYDKGYVQLKNIIDSGEIGQPLMVHGRHYNASTVPEYKTPQAIYETLIHEIDVMHWLLNEDYKTVKVYFPRQSSLVTTLRDPQLVVMETTSGINIVVEVFVNCQYGYDIHCDVTGEKGMAELPTVASAAVRKAAKYSTDILVDWKQRFIDAYDIEFQDFFDRLNAGLPPAGPTSWDGYLAAVTADACVKSQETGNTEIVELPSKPDFYK.

This sequence belongs to the Gfo/Idh/MocA family. Homotetramer.

The catalysed reaction is myo-inositol + NAD(+) = scyllo-inosose + NADH + H(+). In terms of biological role, involved in the oxidation of myo-inositol (MI) to 2-keto-myo-inositol (2KMI or 2-inosose). In Salmonella agona (strain SL483), this protein is Inositol 2-dehydrogenase.